Consider the following 489-residue polypeptide: Ribonuclease G (489 aa).

Residues 39-128 (GNIYKGRVSR…LTTDITLPSR (90 aa)) form the S1 motif domain. 2 residues coordinate Mg(2+): Asp-304 and Asp-347.

Belongs to the RNase E/G family. RNase G subfamily. As to quaternary structure, homodimer, in equilibrium with possible higher multimers. The cofactor is Mg(2+).

Its subcellular location is the cytoplasm. Functionally, an endonuclease that acts in the processing of the 5'-end of 16S rRNA and 23S rRNA. It prefers 5'-monophosphorylated substrates and cleaves single-stranded sites rich in A and U residues; contributes to tRNA processing and mRNA turnover. The protein is Ribonuclease G (rng) of Escherichia coli O157:H7.